The sequence spans 452 residues: MYPWQDFAIQPDFSDKIALRTTQGDMLTWIELTTKINQTVAFLQKKGVNAESAVAFVGKNSEKILFLYLATIQLGAKVLGINPAFPQEKIAKLCEFYQIDFCFYDKDLLNLQEIDVFTQKADFFRPATMTLTSGSTGLPKAVVHNVQAHLDNAKGVCNLMKFDCNQSWLLSLPLYHVSGQGIVWRWLYCGAQLHFPEDDFYASLLKTTHVSLVPTQLQRLLDYLQENPSISFATRHILLGGAHIPTELTQNMLKYGIETYSGYGMTEMASTVFAKKSDRKQGVGQPLLGREYCLVNDEIWLKGAGLAMGYWKDRQIVPLTNNQGWIQTKDKGIWQEGELVIIGRLDNMFISGGENIQPEEIEQVIIQHSSVNQVFVLPQKNKEFGQRPVALVDFNEPFSKSAVENLMFFLQDKLARFKQPIAYYPLPLMLEKGIKISRKQLADWLAKRDEIN.

The protein belongs to the ATP-dependent AMP-binding enzyme family. MenE subfamily.

It catalyses the reaction 2-succinylbenzoate + ATP + CoA = 2-succinylbenzoyl-CoA + AMP + diphosphate. It functions in the pathway quinol/quinone metabolism; 1,4-dihydroxy-2-naphthoate biosynthesis; 1,4-dihydroxy-2-naphthoate from chorismate: step 5/7. The protein operates within quinol/quinone metabolism; menaquinone biosynthesis. Converts 2-succinylbenzoate (OSB) to 2-succinylbenzoyl-CoA (OSB-CoA). The protein is 2-succinylbenzoate--CoA ligase of Haemophilus influenzae (strain ATCC 51907 / DSM 11121 / KW20 / Rd).